A 557-amino-acid polypeptide reads, in one-letter code: Formate--tetrahydrofolate ligase (557 aa).

66–73 (TPAGEGKS) lines the ATP pocket.

The protein belongs to the formate--tetrahydrofolate ligase family.

It catalyses the reaction (6S)-5,6,7,8-tetrahydrofolate + formate + ATP = (6R)-10-formyltetrahydrofolate + ADP + phosphate. The protein operates within one-carbon metabolism; tetrahydrofolate interconversion. This is Formate--tetrahydrofolate ligase from Clostridium botulinum (strain Okra / Type B1).